Here is a 1033-residue protein sequence, read N- to C-terminus: Isoleucine--tRNA ligase 2 (1033 aa).

Positions 47–57 (PTANGLPHVGH) match the 'HIGH' region motif. The 'KMSKS' region motif lies at 590-594 (KMSKS). Lys-593 contacts ATP.

It belongs to the class-I aminoacyl-tRNA synthetase family. IleS type 2 subfamily. As to quaternary structure, monomer. Zn(2+) serves as cofactor.

Its subcellular location is the cytoplasm. It carries out the reaction tRNA(Ile) + L-isoleucine + ATP = L-isoleucyl-tRNA(Ile) + AMP + diphosphate. Functionally, catalyzes the attachment of isoleucine to tRNA(Ile). As IleRS can inadvertently accommodate and process structurally similar amino acids such as valine, to avoid such errors it has two additional distinct tRNA(Ile)-dependent editing activities. One activity is designated as 'pretransfer' editing and involves the hydrolysis of activated Val-AMP. The other activity is designated 'posttransfer' editing and involves deacylation of mischarged Val-tRNA(Ile). The polypeptide is Isoleucine--tRNA ligase 2 (Bacillus thuringiensis subsp. konkukian (strain 97-27)).